The chain runs to 300 residues: Forkhead transcription factor fkh-9 (300 aa).

Positions 66–161 form a DNA-binding region, fork-head; that stretch reads RPSLSYKDLI…DKQTLRRRNR (96 aa). Residues 153-208 are disordered; it reads KQTLRRRNRQQPRALAKKSDAGRTLSRDDRGSSGSGETSPSPSQPSISPPNENPMP. Residues 169-183 are compositionally biased toward basic and acidic residues; the sequence is KKSDAGRTLSRDDRG. A compositionally biased stretch (low complexity) spans 187 to 198; the sequence is SGETSPSPSQPS.

As to expression, expressed in mechanosensory neurons.

It is found in the nucleus. In terms of biological role, transcription factor. Binds to the regulatory elements of genes that contain the sequence motif 5'-TTGTTTCT-3'. Involved in regulating intestinal transcription of vitellogenin vit-2, acting in concert with transcription factors elt-2, mab-3 and daf-16, and also the TGF-beta/Sma/Mab pathway. Functions downstream of the insulin/IGF-1-like signaling (IIS) mediated pathway, in regeneration of axons after injury and in short-term memory, perhaps acting in neurons, and in modulation of longevity, perhaps acting non-neuronally. Plays a role in the modulation of endoplasmic reticulum (ER) homeostasis during chemical and pathogen stress, including exposure to the Gram-negative bacterium P.aeruginosa. The polypeptide is Forkhead transcription factor fkh-9 (Caenorhabditis elegans).